A 361-amino-acid polypeptide reads, in one-letter code: 3-dehydroquinate synthase (361 aa).

NAD(+) is bound by residues 72–77, 130–131, lysine 142, and lysine 151; these read SGEKEK and TT. The Zn(2+) site is built by glutamate 184, histidine 247, and histidine 264.

It belongs to the sugar phosphate cyclases superfamily. Dehydroquinate synthase family. Requires Co(2+) as cofactor. Zn(2+) serves as cofactor. The cofactor is NAD(+).

It is found in the cytoplasm. The catalysed reaction is 7-phospho-2-dehydro-3-deoxy-D-arabino-heptonate = 3-dehydroquinate + phosphate. Its pathway is metabolic intermediate biosynthesis; chorismate biosynthesis; chorismate from D-erythrose 4-phosphate and phosphoenolpyruvate: step 2/7. Its function is as follows. Catalyzes the conversion of 3-deoxy-D-arabino-heptulosonate 7-phosphate (DAHP) to dehydroquinate (DHQ). This chain is 3-dehydroquinate synthase, found in Bacillus cereus (strain ATCC 10987 / NRS 248).